Here is a 637-residue protein sequence, read N- to C-terminus: Biosynthetic arginine decarboxylase (637 aa).

Lys-101 is subject to N6-(pyridoxal phosphate)lysine. 286–296 contacts substrate; that stretch reads VDIGGGLGVDY.

This sequence belongs to the Orn/Lys/Arg decarboxylase class-II family. SpeA subfamily. Mg(2+) serves as cofactor. It depends on pyridoxal 5'-phosphate as a cofactor.

The enzyme catalyses L-arginine + H(+) = agmatine + CO2. It participates in amine and polyamine biosynthesis; agmatine biosynthesis; agmatine from L-arginine: step 1/1. In terms of biological role, catalyzes the biosynthesis of agmatine from arginine. The chain is Biosynthetic arginine decarboxylase from Marinobacter nauticus (strain ATCC 700491 / DSM 11845 / VT8) (Marinobacter aquaeolei).